The following is a 39-amino-acid chain: Photosystem II reaction center protein J (39 aa).

Residues 9-29 (LWLVGLVGGLAVITMLGLFIY) traverse the membrane as a helical segment.

This sequence belongs to the PsbJ family. In terms of assembly, PSII is composed of 1 copy each of membrane proteins PsbA, PsbB, PsbC, PsbD, PsbE, PsbF, PsbH, PsbI, PsbJ, PsbK, PsbL, PsbM, PsbT, PsbX, PsbY, PsbZ, Psb30/Ycf12, at least 3 peripheral proteins of the oxygen-evolving complex and a large number of cofactors. It forms dimeric complexes.

It localises to the plastid. The protein resides in the chloroplast thylakoid membrane. Its function is as follows. One of the components of the core complex of photosystem II (PSII). PSII is a light-driven water:plastoquinone oxidoreductase that uses light energy to abstract electrons from H(2)O, generating O(2) and a proton gradient subsequently used for ATP formation. It consists of a core antenna complex that captures photons, and an electron transfer chain that converts photonic excitation into a charge separation. The polypeptide is Photosystem II reaction center protein J (Phaeodactylum tricornutum (strain CCAP 1055/1)).